We begin with the raw amino-acid sequence, 306 residues long: Polyphosphate kinase PPK2B (306 aa).

It belongs to the polyphosphate kinase 2 (PPK2) family. Class I subfamily. In terms of assembly, homotetramer. Requires Mn(2+) as cofactor.

It carries out the reaction [phosphate](n) + ATP = [phosphate](n+1) + ADP. The enzyme catalyses [phosphate](n) + GTP = [phosphate](n+1) + GDP. In terms of biological role, catalyzes the synthesis of polyP from ATP or GTP. Can also use inorganic polyphosphate (polyP) as a donor to convert ADP to ATP, but the activity is 10-fold higher in vitro for polyP synthesis than for ATP formation. In Corynebacterium glutamicum (strain ATCC 13032 / DSM 20300 / JCM 1318 / BCRC 11384 / CCUG 27702 / LMG 3730 / NBRC 12168 / NCIMB 10025 / NRRL B-2784 / 534), this protein is Polyphosphate kinase PPK2B.